The primary structure comprises 459 residues: Argininosuccinate lyase (459 aa).

It belongs to the lyase 1 family. Argininosuccinate lyase subfamily.

The protein localises to the cytoplasm. It catalyses the reaction 2-(N(omega)-L-arginino)succinate = fumarate + L-arginine. It functions in the pathway amino-acid biosynthesis; L-arginine biosynthesis; L-arginine from L-ornithine and carbamoyl phosphate: step 3/3. This chain is Argininosuccinate lyase, found in Lactococcus lactis subsp. cremoris (strain MG1363).